The primary structure comprises 344 residues: tRNA dimethylallyltransferase (344 aa).

Position 19-26 (19-26) interacts with ATP; it reads GPTASGKT. 21–26 contacts substrate; the sequence is TASGKT.

Belongs to the IPP transferase family. In terms of assembly, monomer. Mg(2+) serves as cofactor.

It carries out the reaction adenosine(37) in tRNA + dimethylallyl diphosphate = N(6)-dimethylallyladenosine(37) in tRNA + diphosphate. In terms of biological role, catalyzes the transfer of a dimethylallyl group onto the adenine at position 37 in tRNAs that read codons beginning with uridine, leading to the formation of N6-(dimethylallyl)adenosine (i(6)A). This chain is tRNA dimethylallyltransferase, found in Bifidobacterium animalis subsp. lactis (strain AD011).